A 286-amino-acid chain; its full sequence is Small ribosomal subunit protein uS3 (286 aa).

The 69-residue stretch at 39–107 (VREYLKKKLA…PVHVNIEEIR (69 aa)) folds into the KH type-2 domain. The segment at 213–286 (QAGAGTAAPQ…KPGVNDAAAS (74 aa)) is disordered. The segment covering 241–262 (GRADARSDGKAGEKKGPRKSDN) has biased composition (basic and acidic residues).

It belongs to the universal ribosomal protein uS3 family. As to quaternary structure, part of the 30S ribosomal subunit. Forms a tight complex with proteins S10 and S14.

Functionally, binds the lower part of the 30S subunit head. Binds mRNA in the 70S ribosome, positioning it for translation. This Nitrosospira multiformis (strain ATCC 25196 / NCIMB 11849 / C 71) protein is Small ribosomal subunit protein uS3.